A 186-amino-acid chain; its full sequence is Trafficking protein particle complex subunit 5 (186 aa).

Belongs to the TRAPP small subunits family. BET3 subfamily. Part of the multisubunit TRAPP (transport protein particle) complex.

Its subcellular location is the golgi apparatus. The protein resides in the cis-Golgi network. It localises to the endoplasmic reticulum. Functionally, may play a role in vesicular transport from endoplasmic reticulum to Golgi. In Dictyostelium discoideum (Social amoeba), this protein is Trafficking protein particle complex subunit 5 (trappc5).